Here is a 374-residue protein sequence, read N- to C-terminus: Heptahelical transmembrane protein 5 (374 aa).

Topologically, residues 1 to 79 (MGDEAEIKEH…LSIFTIHNET (79 aa)) are cytoplasmic. The chain crosses the membrane as a helical span at residues 80-100 (LNVWTHLIGFFLFLALTIYTA). Over 101 to 191 (TKVPSVVDLH…LIFRPITRWP (91 aa)) the chain is Extracellular. The chain crosses the membrane as a helical span at residues 192–212 (FYAFLGGAIFCLLASSTCHLL). Over 213–228 (SCHSERVSYIMLRLDY) the chain is Cytoplasmic. The chain crosses the membrane as a helical span at residues 229–249 (AGIAALIATSFYPPVYYSFMC). Residues 250 to 256 (DPFFCNL) lie on the Extracellular side of the membrane. The chain crosses the membrane as a helical span at residues 257–277 (YLGFITILGIATVLVSLLPVF). The Cytoplasmic segment spans residues 278–288 (QSLEFRVVRAS). The chain crosses the membrane as a helical span at residues 289-309 (LFFGMGFSGLAPILHKLIIFW). Topologically, residues 310-313 (DQPE) are extracellular. A helical membrane pass occupies residues 314–334 (ALHMTGYEILMGLLYGLGAVV). Residues 335-347 (YATRIPERWMPGK) lie on the Cytoplasmic side of the membrane. The helical transmembrane segment at 348 to 368 (FDIAGHSHQLFHVLVVAGALT) threads the bilayer. Over 369 to 374 (HYRAGL) the chain is Extracellular.

Belongs to the ADIPOR family. Expressed in roots, leaves, stems and flowers.

It localises to the membrane. Functionally, may play a role in abiotic stress response. This Arabidopsis thaliana (Mouse-ear cress) protein is Heptahelical transmembrane protein 5 (HHP5).